Here is a 264-residue protein sequence, read N- to C-terminus: Glucosamine-6-phosphate deaminase (264 aa).

Catalysis depends on Asp72, which acts as the Proton acceptor; for enolization step. Asp141 serves as the catalytic For ring-opening step. His143 functions as the Proton acceptor; for ring-opening step in the catalytic mechanism. Catalysis depends on Glu148, which acts as the For ring-opening step.

It belongs to the glucosamine/galactosamine-6-phosphate isomerase family. NagB subfamily. As to quaternary structure, homohexamer.

It catalyses the reaction alpha-D-glucosamine 6-phosphate + H2O = beta-D-fructose 6-phosphate + NH4(+). It participates in amino-sugar metabolism; N-acetylneuraminate degradation; D-fructose 6-phosphate from N-acetylneuraminate: step 5/5. Allosterically activated by N-acetylglucosamine 6-phosphate (GlcNAc6P). Functionally, catalyzes the reversible isomerization-deamination of glucosamine 6-phosphate (GlcN6P) to form fructose 6-phosphate (Fru6P) and ammonium ion. The chain is Glucosamine-6-phosphate deaminase from Glaesserella parasuis serovar 5 (strain SH0165) (Haemophilus parasuis).